The sequence spans 692 residues: Elongation factor G (692 aa).

The tr-type G domain occupies 8 to 283 (QDLRNIGIVA…AVVDYLPSPL (276 aa)). GTP contacts are provided by residues 17–24 (AHIDAGKT), 81–85 (DTPGH), and 135–138 (NKLD).

This sequence belongs to the TRAFAC class translation factor GTPase superfamily. Classic translation factor GTPase family. EF-G/EF-2 subfamily.

It localises to the cytoplasm. Its function is as follows. Catalyzes the GTP-dependent ribosomal translocation step during translation elongation. During this step, the ribosome changes from the pre-translocational (PRE) to the post-translocational (POST) state as the newly formed A-site-bound peptidyl-tRNA and P-site-bound deacylated tRNA move to the P and E sites, respectively. Catalyzes the coordinated movement of the two tRNA molecules, the mRNA and conformational changes in the ribosome. The polypeptide is Elongation factor G (Hydrogenobaculum sp. (strain Y04AAS1)).